We begin with the raw amino-acid sequence, 716 residues long: MEDCLHTSSENLSKLVSWAHSHGTICSLIPNLKHLLSEGSHGNLTAMWGCSAGHAYHWPLTATCRAGSQERVCFQDNRSFNSDSPSIIGVPSETQTSPVERYPGRPVKAKLDCNRTRDSCDFSYCSEPSELDEAVEEYEDENTLFDMVCESSVTDEDSDFEPQTQRPQSIARKRPGIVPSSIHSSSQGQMVDECSNDVIIKKIKQEIPEDYYIVANAELTGGVDGPALSLTQMAKPKPQTHAGPSCVGSAKLIPHVTSAINTELDPHILSASPSVISRPIIPKTARVSLASPNRGPPGAHGTAHQVTMQMPVSTSHPNKQISIPLSALQLPGQDEQVASEEFLPHLPSQVSSCEVALSPSVNTEPEVSSSQQQPPAAPTITTEATAQCIPAYSTKLNKFPVFNINDDLNGLCTSAVSPNTTKATRYALNVWRYWCMTNGLKDHTDITKIPAVKLNELLENFYVTVKKSDGSDFLATSLHAIRRGLDRILKNAGVGFSITSSTFSSSTKKLKEKLWVLSKAGMSGARSRNIVYFSLSDEEEMWQAGCLGDDSPITLLSTVVKYNSQYLNMRTLQEHADLMYGDIELLKDPQNQPYFARTDSVKRESRSGSTRVCHGKIYHEHSRGHKQCPYCLLYKYMYIHRPPTQMEAKSPFYLTARKEATDMGSVWYEEQRMGLRSLRGIVPNLARKVKLENCENFTFVSFTQVSRRLGSHSCCQ.

Disordered regions lie at residues 84–103 (SPSI…ERYP) and 153–189 (VTDE…SQGQ). Residue Ser-97 is modified to Phosphoserine. Glycyl lysine isopeptide (Lys-Gly) (interchain with G-Cter in SUMO2) cross-links involve residues Lys-201, Lys-204, Lys-237, Lys-283, and Lys-626.

This is an uncharacterized protein from Mus musculus (Mouse).